Consider the following 158-residue polypeptide: C-type lectin lectoxin-Enh4 (158 aa).

The first 23 residues, 1 to 23 (MGQFTVVSLGLLAMFLSLSGAKG), serve as a signal peptide directing secretion. Intrachain disulfides connect Cys-26–Cys-37, Cys-54–Cys-154, and Cys-129–Cys-146. One can recognise a C-type lectin domain in the interval 33–155 (RNGVCNKLFP…CASLHPFICQ (123 aa)). A Mannose-binding motif is present at residues 119–121 (EPN). Residues Glu-127, Asn-142, and Asp-143 each contribute to the Ca(2+) site.

It belongs to the true venom lectin family. Expressed by the venom gland.

Its subcellular location is the secreted. In terms of biological role, mannose-binding lectin which recognizes specific carbohydrate structures and agglutinates a variety of animal cells by binding to cell-surface glycoproteins and glycolipids. May be a calcium-dependent lectin. The chain is C-type lectin lectoxin-Enh4 from Pseudoferania polylepis (Macleay's water snake).